The chain runs to 434 residues: MPGDHAGAGAAVGAAKAMQLKVLMPSSFHKMRISDELAADLLGERGDGGGGGGGAPRRAARVVSPVGKVWDVEVGRDDDGDGGGAFLGRGWAEFAAAHGLGMGWFVVVRHEGGGVLTVKLFDTTCCLWDFGARPAVVTTRSGRARDASNKPQFLRVLLPGFMEKMRIPAKFVQHYIAEEHLNIHMASILSPLGKFWRIELEKDELGMFFKGGWLQFLSFHGISPGDVVLLRHEGNLVFKIKVFGINGCKKDLKTKDDITIQQSARNQHETPSFSTRKCNKNSRFGEDCKNQLQEIPCSIKGSRKKGRETKRPKKSKSIYEIGPPSWIKKEISNYMLENGNISLPGIFCKSIGLVEETTITLMINSSRGRSSSSSSRSWEVACSVNKNGYGCCNLLPSGWKRFCQANGLLVGDVCTFSVVEATLWHVAIDRVERS.

DNA-binding regions (TF-B3) lie at residues 27–124 (SFHK…FDTT), 150–246 (KPQF…FGIN), and 326–432 (WIKK…DRVE).

The protein localises to the nucleus. The sequence is that of Putative B3 domain-containing protein Os04g0347400 from Oryza sativa subsp. japonica (Rice).